Consider the following 31-residue polypeptide: Cytochrome b6-f complex subunit 6 (31 aa).

The chain crosses the membrane as a helical span at residues 4–24 (LLSYFGLLLAALISTLVLFIG).

Belongs to the PetL family. The 4 large subunits of the cytochrome b6-f complex are cytochrome b6, subunit IV (17 kDa polypeptide, PetD), cytochrome f and the Rieske protein, while the 4 small subunits are PetG, PetL, PetM and PetN. The complex functions as a dimer.

Its subcellular location is the plastid. It is found in the chloroplast thylakoid membrane. Component of the cytochrome b6-f complex, which mediates electron transfer between photosystem II (PSII) and photosystem I (PSI), cyclic electron flow around PSI, and state transitions. PetL is important for photoautotrophic growth as well as for electron transfer efficiency and stability of the cytochrome b6-f complex. The protein is Cytochrome b6-f complex subunit 6 of Psilotum nudum (Whisk fern).